A 333-amino-acid chain; its full sequence is Phosphate acyltransferase (333 aa).

This sequence belongs to the PlsX family. In terms of assembly, homodimer. Probably interacts with PlsY.

It is found in the cytoplasm. The enzyme catalyses a fatty acyl-[ACP] + phosphate = an acyl phosphate + holo-[ACP]. The protein operates within lipid metabolism; phospholipid metabolism. Catalyzes the reversible formation of acyl-phosphate (acyl-PO(4)) from acyl-[acyl-carrier-protein] (acyl-ACP). This enzyme utilizes acyl-ACP as fatty acyl donor, but not acyl-CoA. This chain is Phosphate acyltransferase, found in Pelagibacter ubique (strain HTCC1062).